The following is a 393-amino-acid chain: Major outer membrane porin, serovar E (393 aa).

Residues 1–22 (MKKLLKSVLVFAALSSASSLQA) form the signal peptide.

This sequence belongs to the chlamydial porin (CP) (TC 1.B.2) family. Part of a disulfide cross-linked outer membrane complex (COMC) composed of the major outer membrane porin (MOMP), the small cysteine-rich protein (OmcA) and the large cysteine-rich periplasmic protein (OmcB).

It is found in the cell outer membrane. In elementary bodies (EBs, the infectious stage, which is able to survive outside the host cell) provides the structural integrity of the outer envelope through disulfide cross-links with the small cysteine-rich protein and the large cysteine-rich periplasmic protein. It has been described in publications as the Sarkosyl-insoluble COMC (Chlamydia outer membrane complex), and serves as the functional equivalent of peptidoglycan. Its function is as follows. Permits diffusion of specific solutes through the outer membrane. The chain is Major outer membrane porin, serovar E (ompA) from Chlamydia trachomatis.